Consider the following 129-residue polypeptide: Glycine cleavage system H protein (129 aa).

The Lipoyl-binding domain maps to 24–106 (LVRVGISAFA…HGEGWLLVLR (83 aa)). The residue at position 65 (Lys65) is an N6-lipoyllysine.

The protein belongs to the GcvH family. The glycine cleavage system is composed of four proteins: P, T, L and H. (R)-lipoate serves as cofactor.

The glycine cleavage system catalyzes the degradation of glycine. The H protein shuttles the methylamine group of glycine from the P protein to the T protein. This chain is Glycine cleavage system H protein, found in Synechococcus sp. (strain CC9605).